Here is a 247-residue protein sequence, read N- to C-terminus: Probable transcriptional regulatory protein HRM2_04000 (247 aa).

It belongs to the TACO1 family.

Its subcellular location is the cytoplasm. In Desulforapulum autotrophicum (strain ATCC 43914 / DSM 3382 / VKM B-1955 / HRM2) (Desulfobacterium autotrophicum), this protein is Probable transcriptional regulatory protein HRM2_04000.